Consider the following 118-residue polypeptide: D-dopachrome decarboxylase (118 aa).

The residue at position 2 (Pro-2) is an N-acetylproline.

This sequence belongs to the MIF family. In terms of assembly, homotrimer.

It is found in the cytoplasm. It catalyses the reaction D-dopachrome + H(+) = 5,6-dihydroxyindole + CO2. Tautomerization of D-dopachrome with decarboxylation to give 5,6-dihydroxyindole (DHI). The protein is D-dopachrome decarboxylase (ddt) of Xenopus tropicalis (Western clawed frog).